We begin with the raw amino-acid sequence, 529 residues long: MEHRIVGPGPYRATRLWNETVELFRAKMPLRKHRCRFKSYEHCFTAAEAVDWLHELLRCSQNFGPEVTRKQTVQLLKKFLKNHVIEDIKGKWGEEDFEDNRHLYRFPPSSPLKPYPKKPPNQKDVIKFPEWNDLPPGTSQENIPVRPVVMNSEMWYKRHSIAIGEVPACRLVHRRQLTEANVEEIWKSMTLSYLQKILGLDSLEEVLDVKLVNSKFIIHNVYSVSKQGVVILDDKSKELPHWVLSAMKCLANWPNCSDLKQPMYLGFEKDVFKTIADYYGHLKEPLLTFHLFDAFVSVLGLLQKEKVAVEAFQICCLLLPPENRRKLQLLMRMMARICLNKEMPPLCDGFGTRTLMVQTFSRCILCSKDEVDLDELLAARLVTFLMDNYQEILKVPLALQTSIEERVAHLRRVQIKYPGADMDITLSAPSFCRQISPEEFEYQRSYGSQEPLAALLEEVITDAKLSNKEKKKKLKQFQKSYPEVYQERFPTPESAALLFPEKPKPKPQLLMWALKKPFQPFQRTRSFRM.

The region spanning 24–108 (FRAKMPLRKH…DNRHLYRFPP (85 aa)) is the DEP domain. Residue Ser-160 is modified to Phosphoserine. The Rho-GAP domain occupies 201–393 (DSLEEVLDVK…FLMDNYQEIL (193 aa)). Residue Ser-436 is modified to Phosphoserine.

The chain is DEP domain-containing protein 1B (DEPDC1B) from Homo sapiens (Human).